The sequence spans 439 residues: Proline--tRNA ligase (439 aa).

It belongs to the class-II aminoacyl-tRNA synthetase family. ProS type 2 subfamily. Homodimer.

The protein resides in the cytoplasm. It carries out the reaction tRNA(Pro) + L-proline + ATP = L-prolyl-tRNA(Pro) + AMP + diphosphate. Its function is as follows. Catalyzes the attachment of proline to tRNA(Pro) in a two-step reaction: proline is first activated by ATP to form Pro-AMP and then transferred to the acceptor end of tRNA(Pro). The polypeptide is Proline--tRNA ligase (Hyphomonas neptunium (strain ATCC 15444)).